A 209-amino-acid chain; its full sequence is Uracil phosphoribosyltransferase (209 aa).

5-phospho-alpha-D-ribose 1-diphosphate contacts are provided by residues Arg79, Arg104, and 131–139 (DPMLATGGS). Uracil contacts are provided by residues Ile194 and 199–201 (GDA). Residue Asp200 participates in 5-phospho-alpha-D-ribose 1-diphosphate binding.

Belongs to the UPRTase family. Mg(2+) serves as cofactor.

It carries out the reaction UMP + diphosphate = 5-phospho-alpha-D-ribose 1-diphosphate + uracil. It participates in pyrimidine metabolism; UMP biosynthesis via salvage pathway; UMP from uracil: step 1/1. Allosterically activated by GTP. In terms of biological role, catalyzes the conversion of uracil and 5-phospho-alpha-D-ribose 1-diphosphate (PRPP) to UMP and diphosphate. This is Uracil phosphoribosyltransferase from Anoxybacillus flavithermus (strain DSM 21510 / WK1).